We begin with the raw amino-acid sequence, 197 residues long: MLHFSGSLTRLVGELKKLPGVGEKSALRLAFHLLKHPNNIEALAQSLLQVGERVHLCSVCFAITEDDPCWICSGERDSGTICVVEEPQDLMALERSRAFGGRYHVLQGALSPLNGVTPKDLRIAELMQRLQGGEVREVLIATNFTVEGEATALYLTRMIKPLSIKVTRLAHGIPVGSDLEYVDAATVQRAVEGRSEL.

The C4-type zinc finger occupies 57 to 72 (CSVCFAITEDDPCWIC). In terms of domain architecture, Toprim spans 79–174 (GTICVVEEPQ…KVTRLAHGIP (96 aa)).

It belongs to the RecR family.

Functionally, may play a role in DNA repair. It seems to be involved in an RecBC-independent recombinational process of DNA repair. It may act with RecF and RecO. This is Recombination protein RecR from Geobacter sp. (strain M21).